We begin with the raw amino-acid sequence, 172 residues long: Peptide deformylase (172 aa).

Fe cation is bound by residues Cys94 and His136. The active site involves Glu137. A Fe cation-binding site is contributed by His140.

This sequence belongs to the polypeptide deformylase family. It depends on Fe(2+) as a cofactor.

It carries out the reaction N-terminal N-formyl-L-methionyl-[peptide] + H2O = N-terminal L-methionyl-[peptide] + formate. Functionally, removes the formyl group from the N-terminal Met of newly synthesized proteins. Requires at least a dipeptide for an efficient rate of reaction. N-terminal L-methionine is a prerequisite for activity but the enzyme has broad specificity at other positions. This is Peptide deformylase from Pelagibacter ubique (strain HTCC1062).